The chain runs to 143 residues: Ribonuclease P protein component 2 (143 aa).

Belongs to the eukaryotic/archaeal RNase P protein component 2 family. Consists of a catalytic RNA component and at least 4-5 protein subunits.

Its subcellular location is the cytoplasm. It carries out the reaction Endonucleolytic cleavage of RNA, removing 5'-extranucleotides from tRNA precursor.. Its function is as follows. Part of ribonuclease P, a protein complex that generates mature tRNA molecules by cleaving their 5'-ends. The protein is Ribonuclease P protein component 2 of Saccharolobus islandicus (strain Y.N.15.51 / Yellowstone #2) (Sulfolobus islandicus).